A 326-amino-acid chain; its full sequence is Diphthine methyltransferase (326 aa).

WD repeat units lie at residues 65 to 105, 113 to 152, 155 to 195, and 293 to 326; these read MHCD…ELMF, DSSV…IKNK, EHDY…SCIW, and EHES…WEDI.

Belongs to the DPH7 family.

It is found in the cytoplasm. Its subcellular location is the nucleus. The enzyme catalyses diphthine methyl ester-[translation elongation factor 2] + H2O = diphthine-[translation elongation factor 2] + methanol + H(+). It participates in protein modification; peptidyl-diphthamide biosynthesis. Catalyzes the demethylation of diphthine methyl ester to form diphthine, an intermediate in diphthamide biosynthesis, a post-translational modification of histidine which occurs in translation elongation factor 2 (eft201 and eft202). The polypeptide is Diphthine methyltransferase (rrt2) (Schizosaccharomyces pombe (strain 972 / ATCC 24843) (Fission yeast)).